The chain runs to 110 residues: PCNA-associated factor (110 aa).

Lysine 15 participates in a covalent cross-link: Glycyl lysine isopeptide (Lys-Gly) (interchain with G-Cter in ubiquitin). The D-box signature appears at 23–34 (RKVLGSSTFVTN). At lysine 24 the chain carries N6-acetyllysine; alternate. Lysine 24 is covalently cross-linked (Glycyl lysine isopeptide (Lys-Gly) (interchain with G-Cter in ubiquitin); alternate). A phosphoserine mark is found at serine 28 and serine 71. Low complexity predominate over residues 28 to 39 (SSTFVTNSSSSS). The interval 28–110 (SSTFVTNSSS…QPDHRDDENE (83 aa)) is disordered. A PIP-box motif is present at residues 61–71 (QKGIGEFFRLS). Basic and acidic residues predominate over residues 71-80 (SPKESKKENQ). Residues 77-79 (KEN) carry the KEN box motif. The Initiation motif motif lies at 84-96 (EAGTSGLGKAKRK).

Interacts (when monoubiquitinated at Lys-15 and Lys-24) with PCNA. Interacts with isoform 2/p33ING1b of ING1. Interacts with BRCA1. In terms of processing, monoubiquitinated at Lys-15 and Lys-24 during normal S phase, promoting its association with PCNA. Also diubiquitinated at these 2 sites. Following DNA damage, monoubiquitin chains at Lys-15 and Lys-24 are probably extended, leading to disrupt the interaction with PCNA. Polyubiquitinated by the APC/C complex at the mitotic exit, leading to its degradation by the proteasome.

The protein localises to the nucleus. It is found in the cytoplasm. It localises to the perinuclear region. In terms of biological role, PCNA-binding protein that acts as a regulator of DNA repair during DNA replication. Following DNA damage, the interaction with PCNA is disrupted, facilitating the interaction between monoubiquitinated PCNA and the translesion DNA synthesis DNA polymerase eta (POLH) at stalled replisomes, facilitating the bypass of replication-fork-blocking lesions. Also acts as a regulator of centrosome number. This is PCNA-associated factor from Mus musculus (Mouse).